The sequence spans 136 residues: Phosphoribosyl-AMP cyclohydrolase (136 aa).

Asp92 provides a ligand contact to Mg(2+). Cys93 is a binding site for Zn(2+). Residues Asp94 and Asp96 each contribute to the Mg(2+) site. Zn(2+) is bound by residues Cys109 and Cys116.

Belongs to the PRA-CH family. As to quaternary structure, homodimer. Requires Mg(2+) as cofactor. Zn(2+) serves as cofactor.

The protein localises to the cytoplasm. It carries out the reaction 1-(5-phospho-beta-D-ribosyl)-5'-AMP + H2O = 1-(5-phospho-beta-D-ribosyl)-5-[(5-phospho-beta-D-ribosylamino)methylideneamino]imidazole-4-carboxamide. It functions in the pathway amino-acid biosynthesis; L-histidine biosynthesis; L-histidine from 5-phospho-alpha-D-ribose 1-diphosphate: step 3/9. With respect to regulation, reversibly inhibited by EDTA and free zinc ions. Enzyme is inactivated by dialysis against 1,10-phenanthroline, which is a zinc specific chelator. Its function is as follows. Catalyzes the hydrolysis of the adenine ring of phosphoribosyl-AMP. This is Phosphoribosyl-AMP cyclohydrolase from Methanococcus vannielii.